We begin with the raw amino-acid sequence, 137 residues long: Partner of bursicon (137 aa).

An N-terminal signal peptide occupies residues methionine 1 to alanine 24. Cystine bridges form between cysteine 28–cysteine 86, cysteine 52–cysteine 101, cysteine 61–cysteine 127, cysteine 65–cysteine 129, and cysteine 83–cysteine 132. A CTCK domain is found at cysteine 28–glutamate 123.

Heterodimer of burs and pburs.

The protein localises to the secreted. Functionally, final heterodimeric neurohormone released at the end of the molting cycle, involved in the sclerotization (tanning) of the insect cuticle, melanization and wing spreading. This chain is Partner of bursicon, found in Bombyx mori (Silk moth).